The primary structure comprises 154 residues: MKIYEGKLTAEGLKVGIIVSRFNEFITSKLLAGSIDCLKRHGAKEDNIEVCWVPGAFEIPVIAKKMASKGKYDAVICLGAVIRGATPHFDYVSSEVSKGVAHVSLDKEVPVIFGVLTTDTIEQAIERAGTKAGNKGYDAAMSAIEMSNLMKVLD.

Residues Phe-22, 56–58 (AFE), and 80–82 (AVI) contribute to the 5-amino-6-(D-ribitylamino)uracil site. A (2S)-2-hydroxy-3-oxobutyl phosphate-binding site is contributed by 85 to 86 (AT). The active-site Proton donor is the His-88. Residue Phe-113 participates in 5-amino-6-(D-ribitylamino)uracil binding. Arg-127 contributes to the (2S)-2-hydroxy-3-oxobutyl phosphate binding site.

This sequence belongs to the DMRL synthase family.

The enzyme catalyses (2S)-2-hydroxy-3-oxobutyl phosphate + 5-amino-6-(D-ribitylamino)uracil = 6,7-dimethyl-8-(1-D-ribityl)lumazine + phosphate + 2 H2O + H(+). It functions in the pathway cofactor biosynthesis; riboflavin biosynthesis; riboflavin from 2-hydroxy-3-oxobutyl phosphate and 5-amino-6-(D-ribitylamino)uracil: step 1/2. Functionally, catalyzes the formation of 6,7-dimethyl-8-ribityllumazine by condensation of 5-amino-6-(D-ribitylamino)uracil with 3,4-dihydroxy-2-butanone 4-phosphate. This is the penultimate step in the biosynthesis of riboflavin. This chain is 6,7-dimethyl-8-ribityllumazine synthase, found in Clostridium botulinum (strain Okra / Type B1).